The chain runs to 463 residues: Immune-associated nucleotide-binding protein 10 (463 aa).

Residues 3 to 211 form the AIG1-type G domain; that stretch reads EPIKNIVLVG…YTYQLHRKIK (209 aa). Residues 12–19 form a G1 region; that stretch reads GRTGNGKS. GTP is bound by residues 12–20 and serine 33; that span reads GRTGNGKSS. Positions 39-43 are G2; that stretch reads GVTMI. The segment at 61 to 64 is G3; it reads DTPG. The tract at residues 131-134 is G4; that stretch reads TGGD. Residues 170–172 are G5; sequence DNK. GTP is bound at residue asparagine 171. Residues 173–308 adopt a coiled-coil conformation; the sequence is SKDEKKKVEQ…KQLIAQANRM (136 aa).

It belongs to the TRAFAC class TrmE-Era-EngA-EngB-Septin-like GTPase superfamily. AIG1/Toc34/Toc159-like paraseptin GTPase family. IAN subfamily. As to expression, expressed in radicles of the germinating seeds.

The polypeptide is Immune-associated nucleotide-binding protein 10 (Arabidopsis thaliana (Mouse-ear cress)).